Reading from the N-terminus, the 418-residue chain is Ceramide synthase LAC1 (418 aa).

Over residues 1-14 (MSTIKPSPSNNNLK) the composition is skewed to polar residues. Residues 1-25 (MSTIKPSPSNNNLKVRSRPRRKSSI) are disordered. Ser-2 bears the N-acetylserine mark. Residues 2 to 81 (STIKPSPSNN…WFSFREISYR (80 aa)) are Cytoplasmic-facing. The span at 15–24 (VRSRPRRKSS) shows a compositional bias: basic residues. 2 positions are modified to phosphoserine: Ser-23 and Ser-24. A helical transmembrane segment spans residues 82 to 102 (HAWIAPLMILIAVYSAYFTSG). A glycan (N-linked (GlcNAc...) asparagine) is linked at Asn-103. The Lumenal portion of the chain corresponds to 103-130 (NTTKTNVLHRFVAVSYQIGDTNAYGKGI). Residues 131-155 (NDLCFVFYYMIFFTFLREFLMDVVI) traverse the membrane as a helical segment. Topologically, residues 156–172 (RPFAIRLHVTSKHRIKR) are cytoplasmic. A TLC domain is found at 168–385 (HRIKRIMEQM…FRVLYRILWR (218 aa)). The fumonisin B1 site is built by Arg-169, Arg-172, and Tyr-182. A helical membrane pass occupies residues 173-194 (IMEQMYAIFYTGVSGPFGIYCM). Residues 195-217 (YHSDLWFFNTKAMYRTYPDFTNP) lie on the Lumenal side of the membrane. The chain crosses the membrane as a helical span at residues 218-240 (FLFKVFYLGQAAFWAQQACILVL). The hexacosanoate site is built by Tyr-224 and Trp-231. Position 231 (Trp-231) interacts with fumonisin B1. Residue Trp-231 coordinates hexacosanoyl-CoA. Over 241-249 (QLEKPRKDH) the chain is Cytoplasmic. Residues 250–268 (NELTFHHIVTLLLIWSSYV) traverse the membrane as a helical segment. Fumonisin B1 is bound at residue His-255. His-255, Thr-259, Leu-262, Ile-263, Ser-265, Ser-266, Phe-269, Phe-271, Met-274, Gly-275, Ile-278, Tyr-279, Met-282, Asp-283, and Asp-286 together coordinate hexacosanoate. Residues His-255, Thr-259, and Leu-262 each contribute to the hexacosanoyl-CoA site. 2 residues coordinate hexacosanoyl-CoA: Ser-265 and Ser-266. The Lumenal segment spans residues 269–273 (FHFTK). 6 residues coordinate hexacosanoyl-CoA: Phe-271, Met-274, Gly-275, Ile-278, Tyr-279, and Met-282. A helical transmembrane segment spans residues 274–295 (MGLPIYITMDVSDFLLSFSKTL). Residues Asp-286, Leu-289, Lys-293, Asn-296, Tyr-297, Ala-303, Phe-304, Phe-307, and Trp-314 each contribute to the fumonisin B1 site. Residues Asp-286, Leu-289, Lys-293, and Asn-296 each contribute to the hexacosanoyl-CoA site. Residues 296 to 305 (NYLDSGLAFF) are Cytoplasmic-facing. The helical transmembrane segment at 306-334 (SFAIFVVAWIYLRHYINLKILWSVLTQFR) threads the bilayer. Residue Phe-307 coordinates hexacosanoyl-CoA. Hexacosanoate-binding residues include Arg-318, Phe-343, Tyr-348, Ile-352, Ser-353, Ile-356, Val-357, Leu-360, Ile-361, and Trp-371. A hexacosanoyl-CoA-binding site is contributed by Arg-318. Residues 335–353 (TEGNYVLNFATQQYKCWIS) are Lumenal-facing. 6 residues coordinate hexacosanoyl-CoA: Tyr-348, Ile-352, Ser-353, Ile-356, Val-357, and Leu-360. The helical transmembrane segment at 354–382 (LPIVFVLIGALQLVNLYWLFLIFRVLYRI) threads the bilayer. 5 residues coordinate fumonisin B1: Trp-371, Ile-375, Val-378, Ile-382, and Arg-385. Trp-371 lines the hexacosanoyl-CoA pocket. Residues 383–418 (LWRGILKDDRSDSESDEESDESSTTPTDSTPTKKDI) lie on the Cytoplasmic side of the membrane. Positions 390 to 418 (DDRSDSESDEESDESSTTPTDSTPTKKDI) are disordered.

Belongs to the sphingosine N-acyltransferase family. As to quaternary structure, component of the ceramide synthase complex composed of at least LAC1, LAG1 and LIP1. Forms a heterotetrameric complex, where one unit of the LIP1 homodimer interacts with LAC1 and the other with either LAC1 or LAG1. Post-translationally, phosphorylated; phosphorylation is induced upon disruption of sphingolipid synthesis. Phosphorylation is inhibited by exogenous addition of phytosphingosine.

It localises to the endoplasmic reticulum membrane. The catalysed reaction is a very long-chain fatty acyl-CoA + a sphingoid base = an N-(very-long-chain fatty acyl)-sphingoid base + CoA + H(+). It catalyses the reaction hexacosanoyl-CoA + sphinganine = N-hexacosanoylsphinganine + CoA + H(+). It carries out the reaction eicosanoyl-CoA + sphinganine = N-eicosanoylsphinganine + CoA + H(+). The enzyme catalyses a fatty acyl-CoA + sphinganine = an N-acylsphinganine + CoA + H(+). The catalysed reaction is (4R)-hydroxysphinganine + a fatty acyl-CoA = an N-acyl-(4R)-4-hydroxysphinganine + CoA + H(+). It participates in lipid metabolism; sphingolipid metabolism. With respect to regulation, as part of the ceramide synthase complex, inhibited by the sphinganine analog mycotoxin, fumonisin B1 (FB1). Activated by ACB1, as part of the ceramide synthase complex. Component of the ceramide synthase complex that catalyzes the transfer of the acyl chain from acyl-CoA to a sphingoid base, with high selectivity toward hexacosanoyl-CoA (C26:0-CoA). N-acylates sphinganine and phytosphingosine bases to form dihydroceramides and phytoceramides, respectively. Redundant with LAG1. Facilitates ER-to-Golgi transport of GPI-anchored proteins. Has a lower affinity for phytosphingosine (PHS) than dihydrosphingosine (DHS); PHS is required for the synthesis of phytoceramides and the formation of nuclear envelopes. Along with LAG1, plays a role in pheromone-induced MAP kinase-activation of mating and formation of diploid cells. May also play a role, together with LAG1, in the polarized membrane distribution of phosphatidylinositol 4,5 biphosphate required for STE5 localization to the plasma membrane. This chain is Ceramide synthase LAC1 (LAC1), found in Saccharomyces cerevisiae (strain ATCC 204508 / S288c) (Baker's yeast).